A 184-amino-acid chain; its full sequence is Shikimate kinase (184 aa).

20-25 (GVGKSR) provides a ligand contact to ATP. S24 lines the Mg(2+) pocket. 3 residues coordinate substrate: D42, R66, and G88. Residue R127 participates in ATP binding. Position 146 (R146) interacts with substrate. R162 is a binding site for ATP.

This sequence belongs to the shikimate kinase family. In terms of assembly, monomer. Mg(2+) is required as a cofactor.

Its subcellular location is the cytoplasm. It carries out the reaction shikimate + ATP = 3-phosphoshikimate + ADP + H(+). It functions in the pathway metabolic intermediate biosynthesis; chorismate biosynthesis; chorismate from D-erythrose 4-phosphate and phosphoenolpyruvate: step 5/7. Catalyzes the specific phosphorylation of the 3-hydroxyl group of shikimic acid using ATP as a cosubstrate. This chain is Shikimate kinase, found in Thermus thermophilus (strain ATCC BAA-163 / DSM 7039 / HB27).